Consider the following 71-residue polypeptide: Small ribosomal subunit protein bS21 (71 aa).

Belongs to the bacterial ribosomal protein bS21 family.

The protein is Small ribosomal subunit protein bS21 of Shewanella sediminis (strain HAW-EB3).